The sequence spans 629 residues: Methyl-accepting chemotaxis protein PscA (629 aa).

Over 1 to 9 (MKNLGFSKK) the chain is Cytoplasmic. Residues 10–30 (ILLAAALIVVVAFSVFIVIND) form a helical membrane-spanning segment. The Periplasmic portion of the chain corresponds to 31 to 276 (YRQRQSLKSS…AYAMLTEFRT (246 aa)). Positions 36-258 (SLKSSVKSEL…QGVATANWYV (223 aa)) constitute a Cache domain. Residues 277–297 (SAITAMVVVVMVIILLLGPLI) form a helical membrane-spanning segment. One can recognise an HAMP domain in the interval 298 to 352 (RVLMQPLHQMGRAMRDIADGEGDLTKRLAITSHDEFGALAESFNHFVERIHTSIR). Residues 298-629 (RVLMQPLHQM…LQQLVGSFRI (332 aa)) lie on the Cytoplasmic side of the membrane. Residues 357 to 593 (TAAQLGEVAT…SINVDITHIN (237 aa)) enclose the Methyl-accepting transducer domain.

This sequence belongs to the methyl-accepting chemotaxis (MCP) protein family.

The protein resides in the cell inner membrane. In terms of biological role, chemotactic-signal transducers respond to changes in the concentration of attractants and repellents in the environment, transduce a signal from the outside to the inside of the cell, and facilitate sensory adaptation through the variation of the level of methylation. PscA recognizes specifically and with high affinity L-Asp, D-Asp and L-Glu. It exerts a double function, in mediating chemotaxis to these amino acids and in modulating cyclic di-GMP (c-di-GMP) levels, causing alterations in biofilm development. Plays a key role in the infection process. It may facilitate bacterial entry into the plant. In Pseudomonas syringae pv. tomato (strain ATCC BAA-871 / DC3000), this protein is Methyl-accepting chemotaxis protein PscA.